A 327-amino-acid polypeptide reads, in one-letter code: Beta-ketoacyl-[acyl-carrier-protein] synthase III (327 aa).

Catalysis depends on residues cysteine 112 and histidine 253. Positions 254–258 (QANER) are ACP-binding. Residue asparagine 283 is part of the active site.

It belongs to the thiolase-like superfamily. FabH family. Homodimer.

Its subcellular location is the cytoplasm. The catalysed reaction is malonyl-[ACP] + acetyl-CoA + H(+) = 3-oxobutanoyl-[ACP] + CO2 + CoA. Its pathway is lipid metabolism; fatty acid biosynthesis. In terms of biological role, catalyzes the condensation reaction of fatty acid synthesis by the addition to an acyl acceptor of two carbons from malonyl-ACP. Catalyzes the first condensation reaction which initiates fatty acid synthesis and may therefore play a role in governing the total rate of fatty acid production. Possesses both acetoacetyl-ACP synthase and acetyl transacylase activities. Its substrate specificity determines the biosynthesis of branched-chain and/or straight-chain of fatty acids. The protein is Beta-ketoacyl-[acyl-carrier-protein] synthase III of Chlamydia trachomatis serovar A (strain ATCC VR-571B / DSM 19440 / HAR-13).